Here is a 215-residue protein sequence, read N- to C-terminus: Probable transaldolase (215 aa).

K83 (schiff-base intermediate with substrate) is an active-site residue.

It belongs to the transaldolase family. Type 3B subfamily.

Its subcellular location is the cytoplasm. The catalysed reaction is D-sedoheptulose 7-phosphate + D-glyceraldehyde 3-phosphate = D-erythrose 4-phosphate + beta-D-fructose 6-phosphate. It participates in carbohydrate degradation; pentose phosphate pathway; D-glyceraldehyde 3-phosphate and beta-D-fructose 6-phosphate from D-ribose 5-phosphate and D-xylulose 5-phosphate (non-oxidative stage): step 2/3. Its function is as follows. Transaldolase is important for the balance of metabolites in the pentose-phosphate pathway. The protein is Probable transaldolase of Desulforapulum autotrophicum (strain ATCC 43914 / DSM 3382 / VKM B-1955 / HRM2) (Desulfobacterium autotrophicum).